We begin with the raw amino-acid sequence, 196 residues long: Probable malonic semialdehyde reductase RutE (196 aa).

This sequence belongs to the nitroreductase family. HadB/RutE subfamily. Requires FMN as cofactor.

The catalysed reaction is 3-hydroxypropanoate + NADP(+) = 3-oxopropanoate + NADPH + H(+). In terms of biological role, may reduce toxic product malonic semialdehyde to 3-hydroxypropionic acid, which is excreted. The chain is Probable malonic semialdehyde reductase RutE from Escherichia coli O139:H28 (strain E24377A / ETEC).